A 233-amino-acid polypeptide reads, in one-letter code: Urease accessory protein UreF (233 aa).

This sequence belongs to the UreF family. In terms of assembly, ureD, UreF and UreG form a complex that acts as a GTP-hydrolysis-dependent molecular chaperone, activating the urease apoprotein by helping to assemble the nickel containing metallocenter of UreC. The UreE protein probably delivers the nickel.

The protein resides in the cytoplasm. Required for maturation of urease via the functional incorporation of the urease nickel metallocenter. The protein is Urease accessory protein UreF of Polaromonas sp. (strain JS666 / ATCC BAA-500).